Here is a 373-residue protein sequence, read N- to C-terminus: Probable di-N-acetylchitobiase 1 (373 aa).

Residues 1 to 20 (MKIFIIISLILTILIIQSKS) form the signal peptide. The GH18 domain occupies 21–369 (KECPCSNVEL…SGMWGALNSF (349 aa)). N-linked (GlcNAc...) asparagine glycosylation occurs at Asn-48. Chitin is bound by residues 53–54 (PY) and 82–85 (NGVR). Asn-99 carries an N-linked (GlcNAc...) asparagine glycan. Glu-127 serves as the catalytic Proton donor. Chitin contacts are provided by residues Tyr-128 and 191-194 (MDYD). N-linked (GlcNAc...) asparagine glycosylation is found at Asn-222, Asn-250, Asn-269, Asn-279, and Asn-288. Trp-347 is a binding site for chitin.

It belongs to the glycosyl hydrolase 18 family.

The protein localises to the lysosome. Its function is as follows. Involved in the degradation of asparagine-linked glycoproteins. May hydrolyze of N-acetyl-beta-D-glucosamine (1-4)N-acetylglucosamine chitobiose core from the reducing end of the bond. The protein is Probable di-N-acetylchitobiase 1 (ctbs1) of Dictyostelium discoideum (Social amoeba).